Reading from the N-terminus, the 206-residue chain is MLVTIEGIDGSGKSTLHKALGPYLADLNPVITCEPGSTWIGEAVRRAIREHADPIAEALLFVADHAAHLREVVRPALSEDRLVISDRYIDSRLVYQQVTLDGIIPDPRTWLRAVHQGWTIMPDLTILLAVPVPVALERTGKRGSGEHFEQESVLTKVQEYYMQLVEEDTARFLILDGTLPPEHILKVAGEAIRFRFDEMNRKKKKS.

7–14 is an ATP binding site; that stretch reads GIDGSGKS.

Belongs to the thymidylate kinase family.

It carries out the reaction dTMP + ATP = dTDP + ADP. This is Probable thymidylate kinase from Methanospirillum hungatei JF-1 (strain ATCC 27890 / DSM 864 / NBRC 100397 / JF-1).